The following is a 241-amino-acid chain: Triosephosphate isomerase (241 aa).

Residue 9 to 11 (NWK) participates in substrate binding. Catalysis depends on H96, which acts as the Electrophile. E165 acts as the Proton acceptor in catalysis. Residues G171, S204, and 225–226 (GG) contribute to the substrate site.

The protein belongs to the triosephosphate isomerase family. As to quaternary structure, homodimer.

It localises to the cytoplasm. The catalysed reaction is D-glyceraldehyde 3-phosphate = dihydroxyacetone phosphate. It participates in carbohydrate biosynthesis; gluconeogenesis. It functions in the pathway carbohydrate degradation; glycolysis; D-glyceraldehyde 3-phosphate from glycerone phosphate: step 1/1. In terms of biological role, involved in the gluconeogenesis. Catalyzes stereospecifically the conversion of dihydroxyacetone phosphate (DHAP) to D-glyceraldehyde-3-phosphate (G3P). This Prochlorococcus marinus (strain MIT 9301) protein is Triosephosphate isomerase.